The following is a 596-amino-acid chain: Arginine--tRNA ligase (596 aa).

Positions 139 to 149 match the 'HIGH' region motif; it reads ANPTGPLHVGH.

The protein belongs to the class-I aminoacyl-tRNA synthetase family. Monomer.

The protein localises to the cytoplasm. It catalyses the reaction tRNA(Arg) + L-arginine + ATP = L-arginyl-tRNA(Arg) + AMP + diphosphate. In Paraburkholderia phytofirmans (strain DSM 17436 / LMG 22146 / PsJN) (Burkholderia phytofirmans), this protein is Arginine--tRNA ligase.